Here is a 450-residue protein sequence, read N- to C-terminus: tRNA-2-methylthio-N(6)-dimethylallyladenosine synthase (450 aa).

The 119-residue stretch at 14 to 132 (GEFFIETWGC…FPNYLNEVKK (119 aa)) folds into the MTTase N-terminal domain. The [4Fe-4S] cluster site is built by Cys23, Cys59, Cys93, Cys169, Cys173, and Cys176. Residues 155–385 (RKNSMKAFVT…VEVVNEISAK (231 aa)) form the Radical SAM core domain. Positions 388–450 (KAYEGKIEEV…NSFSLTGEEI (63 aa)) constitute a TRAM domain.

It belongs to the methylthiotransferase family. MiaB subfamily. Monomer. Requires [4Fe-4S] cluster as cofactor.

Its subcellular location is the cytoplasm. It carries out the reaction N(6)-dimethylallyladenosine(37) in tRNA + (sulfur carrier)-SH + AH2 + 2 S-adenosyl-L-methionine = 2-methylsulfanyl-N(6)-dimethylallyladenosine(37) in tRNA + (sulfur carrier)-H + 5'-deoxyadenosine + L-methionine + A + S-adenosyl-L-homocysteine + 2 H(+). Functionally, catalyzes the methylthiolation of N6-(dimethylallyl)adenosine (i(6)A), leading to the formation of 2-methylthio-N6-(dimethylallyl)adenosine (ms(2)i(6)A) at position 37 in tRNAs that read codons beginning with uridine. The chain is tRNA-2-methylthio-N(6)-dimethylallyladenosine synthase from Clostridium botulinum (strain Okra / Type B1).